The sequence spans 314 residues: Probable UDP-sugar transporter protein SLC35A4 (314 aa).

At 1–20 (MIAISADESPESSSPALRLR) the chain is on the cytoplasmic side. A helical transmembrane segment spans residues 21–41 (WLFLLLLLVLIYGSHAPLLSL). The Lumenal segment spans residues 42–54 (CKTQAQIPFSASS). The chain crosses the membrane as a helical span at residues 55-75 (CVLLIETSKLFISFASLLASG). Residues 76–88 (SVSTLRISISMTT) are Cytoplasmic-facing. A helical membrane pass occupies residues 89–109 (ASPYAVPAVLYAFNNHLVVFM). Over 110–145 (QAYMDPSSFQVLSNLKIASTALLYTSCLGKRLHRRQ) the chain is Lumenal. A helical membrane pass occupies residues 146-166 (WFAMGLLVSAGVSHSCFSYDL). Residues 167–175 (EGKRETAVY) lie on the Cytoplasmic side of the membrane. Residues 176-196 (ITSWGLLLVLVYCFVSGLAAV) form a helical membrane-spanning segment. Over 197-206 (YTERVLKSQR) the chain is Lumenal. A helical membrane pass occupies residues 207-227 (LPLSMQNLFLYTFGVVVNLAS). Residues 228 to 242 (HLSGGEQKGFFEGYS) lie on the Cytoplasmic side of the membrane. The helical transmembrane segment at 243–263 (AVVWVIVAGQVANGLLMSVVM) threads the bilayer. Over 264–267 (KHGT) the chain is Lumenal. A helical transmembrane segment spans residues 268 to 290 (GITRLFVISSAMLVNAVLSWGIL). Residues 291-314 (GVQLTGYFLFPVVLIGWAVYLYYT) are Cytoplasmic-facing.

It belongs to the nucleotide-sugar transporter family. SLC35A subfamily.

The protein resides in the golgi apparatus membrane. The catalysed reaction is CDP-L-ribitol(in) + CDP(out) = CDP-L-ribitol(out) + CDP(in). Functionally, mediates the transport of CDP-ribitol. Does not exhibit CMP-sialic acid, UDP-galactose and UDP-N-acetylglucosamine transport activity. The protein is Probable UDP-sugar transporter protein SLC35A4 of Danio rerio (Zebrafish).